We begin with the raw amino-acid sequence, 80 residues long: Exodeoxyribonuclease 7 small subunit (80 aa).

This sequence belongs to the XseB family. As to quaternary structure, heterooligomer composed of large and small subunits.

Its subcellular location is the cytoplasm. The enzyme catalyses Exonucleolytic cleavage in either 5'- to 3'- or 3'- to 5'-direction to yield nucleoside 5'-phosphates.. In terms of biological role, bidirectionally degrades single-stranded DNA into large acid-insoluble oligonucleotides, which are then degraded further into small acid-soluble oligonucleotides. In Erwinia tasmaniensis (strain DSM 17950 / CFBP 7177 / CIP 109463 / NCPPB 4357 / Et1/99), this protein is Exodeoxyribonuclease 7 small subunit.